The primary structure comprises 359 residues: Type-1 angiotensin II receptor (359 aa).

Residues 1 to 25 (MILNSSTEDGIKRIQDDCPKAGRHS) are Extracellular-facing. N-linked (GlcNAc...) asparagine glycosylation is present at asparagine 4. The angiotensin II site is built by glutamine 15 and aspartate 17. 2 disulfides stabilise this stretch: cysteine 18–cysteine 274 and cysteine 101–cysteine 180. Residues 26–55 (YIFVMIPTLYSIIFVVGIFGNSLVVIVIYF) form a helical membrane-spanning segment. Residues 56 to 61 (YMKLKT) are Cytoplasmic-facing. A helical transmembrane segment spans residues 62-89 (VASVFLLNLALADICFLLTLPLWAVYTA). Residues 90–98 (MEYRWPFGN) lie on the Extracellular side of the membrane. A helical membrane pass occupies residues 99 to 125 (YLCKIASASVSFNLYASVFLLTCLSID). The Cytoplasmic segment spans residues 126 to 141 (RYLAIVHPMKSRLRRT). The helical transmembrane segment at 142 to 165 (MLVAKVTCVIIWLMAGLASLPAVI) threads the bilayer. The Extracellular segment spans residues 166-190 (HRNVFFIENTNITVCAFHYESQNST). Residue arginine 167 coordinates angiotensin II. Asparagine 176 carries an N-linked (GlcNAc...) asparagine glycan. Residues phenylalanine 182, histidine 183, and tyrosine 184 each coordinate angiotensin II. Asparagine 188 carries an N-linked (GlcNAc...) asparagine glycan. A helical transmembrane segment spans residues 191–216 (LPIGLGLTKNILGFMFPFLIILTSYT). An angiotensin II-binding site is contributed by lysine 199. Residues 217 to 239 (LIWKALKKAYEIQKNKPRNDDIF) lie on the Cytoplasmic side of the membrane. Residues 240–268 (KIIMAIVLFFFFSWVPHQIFTFLDVLIQL) traverse the membrane as a helical segment. At 269 to 278 (GIIHDCKISD) the chain is on the extracellular side. Residues 279–304 (IVDTAMPITICIAYFNNCLNPLFYGF) form a helical membrane-spanning segment. Topologically, residues 305–359 (LGKKFKKYFLQLLKYIPPKAKSHSTLSTKMSTLSYRPSDNVSSSAKKPVQCFEVE) are cytoplasmic. Positions 337 to 349 (LSYRPSDNVSSSA) are enriched in polar residues. Positions 337-359 (LSYRPSDNVSSSAKKPVQCFEVE) are disordered. Cysteine 355 carries the S-palmitoyl cysteine lipid modification.

The protein belongs to the G-protein coupled receptor 1 family. In terms of assembly, interacts with MAS1. Interacts with ARRB1. Interacts with FLNA (via filamin repeat 21); increases PKA-mediated phosphorylation of FLNA. C-terminal Ser or Thr residues may be phosphorylated. As to expression, expressed in liver, kidney, adrenal gland, heart and colon.

It is found in the cell membrane. Receptor for angiotensin II, a vasoconstricting peptide, which acts as a key regulator of blood pressure and sodium retention by the kidney. The activated receptor in turn couples to G-alpha proteins G(q) (GNAQ, GNA11, GNA14 or GNA15) and thus activates phospholipase C and increases the cytosolic Ca(2+) concentrations, which in turn triggers cellular responses such as stimulation of protein kinase C. This is Type-1 angiotensin II receptor (AGTR1) from Cavia porcellus (Guinea pig).